A 140-amino-acid chain; its full sequence is FK506-binding protein 2 (140 aa).

An N-terminal signal peptide occupies residues 1 to 19 (MKFTTGLSVLLFFVLQVFA). Residues 43–132 (GDVVSVHYTG…IFETELVDIQ (90 aa)) form the PPIase FKBP-type domain.

It belongs to the FKBP-type PPIase family. FKBP2 subfamily.

It localises to the endoplasmic reticulum. The catalysed reaction is [protein]-peptidylproline (omega=180) = [protein]-peptidylproline (omega=0). Its activity is regulated as follows. Inhibited by both FK506 and rapamycin. Its function is as follows. PPIases accelerate the folding of proteins. It catalyzes the cis-trans isomerization of proline imidic peptide bonds in oligopeptides. This is FK506-binding protein 2 (FPR2) from Kluyveromyces lactis (strain ATCC 8585 / CBS 2359 / DSM 70799 / NBRC 1267 / NRRL Y-1140 / WM37) (Yeast).